The sequence spans 128 residues: Small ribosomal subunit protein uS11 (128 aa).

The protein belongs to the universal ribosomal protein uS11 family. Part of the 30S ribosomal subunit. Interacts with proteins S7 and S18. Binds to IF-3.

Its function is as follows. Located on the platform of the 30S subunit, it bridges several disparate RNA helices of the 16S rRNA. Forms part of the Shine-Dalgarno cleft in the 70S ribosome. The protein is Small ribosomal subunit protein uS11 of Leuconostoc mesenteroides subsp. mesenteroides (strain ATCC 8293 / DSM 20343 / BCRC 11652 / CCM 1803 / JCM 6124 / NCDO 523 / NBRC 100496 / NCIMB 8023 / NCTC 12954 / NRRL B-1118 / 37Y).